Reading from the N-terminus, the 184-residue chain is Photosystem I assembly protein Ycf3 (184 aa).

3 TPR repeats span residues 31–64, 68–101, and 131–164; these read AFAY…DEDQ, SYTL…NSNL, and MEIS…APDN.

The protein belongs to the Ycf3 family.

The protein localises to the plastid. The protein resides in the chloroplast thylakoid membrane. In terms of biological role, essential for the assembly of the photosystem I (PSI) complex. May act as a chaperone-like factor to guide the assembly of the PSI subunits. The chain is Photosystem I assembly protein Ycf3 from Thalassiosira pseudonana (Marine diatom).